The primary structure comprises 313 residues: Porphobilinogen deaminase (313 aa).

An S-(dipyrrolylmethanemethyl)cysteine modification is found at cysteine 242.

It belongs to the HMBS family. As to quaternary structure, monomer. The cofactor is dipyrromethane.

It catalyses the reaction 4 porphobilinogen + H2O = hydroxymethylbilane + 4 NH4(+). The protein operates within porphyrin-containing compound metabolism; protoporphyrin-IX biosynthesis; coproporphyrinogen-III from 5-aminolevulinate: step 2/4. Functionally, tetrapolymerization of the monopyrrole PBG into the hydroxymethylbilane pre-uroporphyrinogen in several discrete steps. The sequence is that of Porphobilinogen deaminase from Yersinia pseudotuberculosis serotype O:1b (strain IP 31758).